A 540-amino-acid polypeptide reads, in one-letter code: Putative serine protease F56F10.1 (540 aa).

The first 16 residues, M1–A16, serve as a signal peptide directing secretion. 2 N-linked (GlcNAc...) asparagine glycosylation sites follow: N58 and N87. Catalysis depends on S182, which acts as the Charge relay system. N270, N300, N317, N343, N441, and N449 each carry an N-linked (GlcNAc...) asparagine glycan. Residue D453 is the Charge relay system of the active site. An N-linked (GlcNAc...) asparagine glycan is attached at N475. The active-site Charge relay system is the H479.

This sequence belongs to the peptidase S28 family.

This Caenorhabditis elegans protein is Putative serine protease F56F10.1.